Here is a 91-residue protein sequence, read N- to C-terminus: Acylphosphatase (91 aa).

An Acylphosphatase-like domain is found at 3–91 (CLRAIVKGKV…ANYSDFRIKH (89 aa)). Active-site residues include Arg18 and Asn36.

This sequence belongs to the acylphosphatase family.

The catalysed reaction is an acyl phosphate + H2O = a carboxylate + phosphate + H(+). This Dehalococcoides mccartyi (strain CBDB1) protein is Acylphosphatase (acyP).